The sequence spans 341 residues: Methionine import ATP-binding protein MetN 2 (341 aa).

Positions I2–V241 constitute an ABC transporter domain. G38–S45 is an ATP binding site.

The protein belongs to the ABC transporter superfamily. Methionine importer (TC 3.A.1.24) family. As to quaternary structure, the complex is composed of two ATP-binding proteins (MetN), two transmembrane proteins (MetI) and a solute-binding protein (MetQ).

It localises to the cell membrane. The enzyme catalyses L-methionine(out) + ATP + H2O = L-methionine(in) + ADP + phosphate + H(+). It catalyses the reaction D-methionine(out) + ATP + H2O = D-methionine(in) + ADP + phosphate + H(+). In terms of biological role, part of the ABC transporter complex MetNIQ involved in methionine import. Responsible for energy coupling to the transport system. In Staphylococcus aureus (strain N315), this protein is Methionine import ATP-binding protein MetN 2.